The sequence spans 71 residues: Pro-glucagon (71 aa).

It belongs to the glucagon family.

It localises to the secreted. Plays a key role in glucose metabolism and homeostasis. Regulates blood glucose by increasing gluconeogenesis and decreasing glycolysis. The protein is Pro-glucagon (gcg) of Ictalurus punctatus (Channel catfish).